The following is a 632-amino-acid chain: 1-deoxy-D-xylulose-5-phosphate synthase (632 aa).

Thiamine diphosphate-binding positions include H87 and G128–S130. Position 159 (D159) interacts with Mg(2+). Residues G160–A161, N188, F295, and E378 contribute to the thiamine diphosphate site. Residue N188 coordinates Mg(2+).

This sequence belongs to the transketolase family. DXPS subfamily. As to quaternary structure, homodimer. Requires Mg(2+) as cofactor. The cofactor is thiamine diphosphate.

The catalysed reaction is D-glyceraldehyde 3-phosphate + pyruvate + H(+) = 1-deoxy-D-xylulose 5-phosphate + CO2. The protein operates within metabolic intermediate biosynthesis; 1-deoxy-D-xylulose 5-phosphate biosynthesis; 1-deoxy-D-xylulose 5-phosphate from D-glyceraldehyde 3-phosphate and pyruvate: step 1/1. In terms of biological role, catalyzes the acyloin condensation reaction between C atoms 2 and 3 of pyruvate and glyceraldehyde 3-phosphate to yield 1-deoxy-D-xylulose-5-phosphate (DXP). The chain is 1-deoxy-D-xylulose-5-phosphate synthase from Pseudomonas fluorescens (strain SBW25).